Reading from the N-terminus, the 351-residue chain is Homeobox-leucine zipper protein HOX23 (351 aa).

The segment at Leu-34–Pro-128 is disordered. Low complexity predominate over residues Ser-56–Asp-65. The homeobox DNA-binding region spans Gly-101–Gln-160. Basic and acidic residues predominate over residues Arg-114–Pro-128. The interval Lys-159 to Ala-203 is leucine-zipper. The disordered stretch occupies residues Glu-227–Arg-263. A compositionally biased stretch (polar residues) spans Ala-228–Ile-240. The span at Pro-247–Asn-257 shows a compositional bias: pro residues.

This sequence belongs to the HD-ZIP homeobox family. Class I subfamily. As to expression, expressed in seedlings, roots, stems, leaf sheaths and panicles.

The protein resides in the nucleus. Probable transcription factor. This chain is Homeobox-leucine zipper protein HOX23 (HOX23), found in Oryza sativa subsp. indica (Rice).